The chain runs to 463 residues: Bifunctional protein GlmU (463 aa).

The tract at residues 1–233 (MSKKSTFIIL…NFEVMGINSR (233 aa)) is pyrophosphorylase. UDP-N-acetyl-alpha-D-glucosamine-binding positions include 10-13 (LAAG), Lys-24, Gln-76, 81-82 (GT), 104-106 (YGD), Gly-143, Glu-158, Asn-173, and Asn-231. Asp-106 is a binding site for Mg(2+). Residue Asn-231 participates in Mg(2+) binding. The linker stretch occupies residues 234 to 254 (YELFVAEQELKLRINKEHLSK). An N-acetyltransferase region spans residues 255–463 (GVQIIDIYST…LRRKQMYENR (209 aa)). Residues Arg-336 and Lys-354 each coordinate UDP-N-acetyl-alpha-D-glucosamine. His-366 (proton acceptor) is an active-site residue. The UDP-N-acetyl-alpha-D-glucosamine site is built by Tyr-369 and Asn-380. Acetyl-CoA is bound by residues 389-390 (NY), Ala-426, and Arg-443.

This sequence in the N-terminal section; belongs to the N-acetylglucosamine-1-phosphate uridyltransferase family. It in the C-terminal section; belongs to the transferase hexapeptide repeat family. Homotrimer. The cofactor is Mg(2+).

Its subcellular location is the cytoplasm. The enzyme catalyses alpha-D-glucosamine 1-phosphate + acetyl-CoA = N-acetyl-alpha-D-glucosamine 1-phosphate + CoA + H(+). It carries out the reaction N-acetyl-alpha-D-glucosamine 1-phosphate + UTP + H(+) = UDP-N-acetyl-alpha-D-glucosamine + diphosphate. Its pathway is nucleotide-sugar biosynthesis; UDP-N-acetyl-alpha-D-glucosamine biosynthesis; N-acetyl-alpha-D-glucosamine 1-phosphate from alpha-D-glucosamine 6-phosphate (route II): step 2/2. The protein operates within nucleotide-sugar biosynthesis; UDP-N-acetyl-alpha-D-glucosamine biosynthesis; UDP-N-acetyl-alpha-D-glucosamine from N-acetyl-alpha-D-glucosamine 1-phosphate: step 1/1. It participates in bacterial outer membrane biogenesis; LPS lipid A biosynthesis. In terms of biological role, catalyzes the last two sequential reactions in the de novo biosynthetic pathway for UDP-N-acetylglucosamine (UDP-GlcNAc). The C-terminal domain catalyzes the transfer of acetyl group from acetyl coenzyme A to glucosamine-1-phosphate (GlcN-1-P) to produce N-acetylglucosamine-1-phosphate (GlcNAc-1-P), which is converted into UDP-GlcNAc by the transfer of uridine 5-monophosphate (from uridine 5-triphosphate), a reaction catalyzed by the N-terminal domain. This chain is Bifunctional protein GlmU, found in Caldicellulosiruptor saccharolyticus (strain ATCC 43494 / DSM 8903 / Tp8T 6331).